A 494-amino-acid chain; its full sequence is UPF0371 protein M28_Spy1076 (494 aa).

This sequence belongs to the UPF0371 family.

The chain is UPF0371 protein M28_Spy1076 from Streptococcus pyogenes serotype M28 (strain MGAS6180).